Reading from the N-terminus, the 59-residue chain is Thrombostatin (59 aa).

Intrachain disulfides connect Cys3–Cys22, Cys17–Cys37, Cys39–Cys51, and Cys52–Cys57. The Cell attachment site signature appears at 43–45 (RGD).

The protein belongs to the three-finger toxin family. Short-chain subfamily. Antiplatelet toxin sub-subfamily. Expressed by the venom gland.

It localises to the secreted. Functionally, inhibits ADP-induced platelet aggregation and inhibits the binding of purified platelet fibrinogen receptor alpha-IIb/beta-3 (ITGA2B/ITGB3) to immobilized fibrinogen. This is Thrombostatin from Dendroaspis angusticeps (Eastern green mamba).